The sequence spans 164 residues: UPF0114 protein YqhA (164 aa).

A run of 3 helical transmembrane segments spans residues 15–35 (LLAPVYFGLSLALIALALKFF), 53–73 (LILVLLSLVDMTLVGGLLVMV), and 136–156 (LMWYVIIHLTFVLSAFVMGYL).

Belongs to the UPF0114 family.

Its subcellular location is the cell membrane. This chain is UPF0114 protein YqhA, found in Escherichia coli O6:H1 (strain CFT073 / ATCC 700928 / UPEC).